Here is a 55-residue protein sequence, read N- to C-terminus: Large ribosomal subunit protein bL33 (55 aa).

The protein belongs to the bacterial ribosomal protein bL33 family.

The sequence is that of Large ribosomal subunit protein bL33 from Parvibaculum lavamentivorans (strain DS-1 / DSM 13023 / NCIMB 13966).